Here is a 282-residue protein sequence, read N- to C-terminus: Biotin synthase (282 aa).

The 228-residue stretch at methionine 1–arginine 228 folds into the Radical SAM core domain. [4Fe-4S] cluster contacts are provided by cysteine 17, cysteine 21, and cysteine 24. [2Fe-2S] cluster-binding residues include cysteine 61, cysteine 96, cysteine 154, and arginine 221.

It belongs to the radical SAM superfamily. Biotin synthase family. As to quaternary structure, homodimer. It depends on [4Fe-4S] cluster as a cofactor. The cofactor is [2Fe-2S] cluster.

It catalyses the reaction (4R,5S)-dethiobiotin + (sulfur carrier)-SH + 2 reduced [2Fe-2S]-[ferredoxin] + 2 S-adenosyl-L-methionine = (sulfur carrier)-H + biotin + 2 5'-deoxyadenosine + 2 L-methionine + 2 oxidized [2Fe-2S]-[ferredoxin]. The protein operates within cofactor biosynthesis; biotin biosynthesis; biotin from 7,8-diaminononanoate: step 2/2. In terms of biological role, catalyzes the conversion of dethiobiotin (DTB) to biotin by the insertion of a sulfur atom into dethiobiotin via a radical-based mechanism. This chain is Biotin synthase, found in Helicobacter pylori (strain ATCC 700392 / 26695) (Campylobacter pylori).